We begin with the raw amino-acid sequence, 868 residues long: Protein translocase subunit SecA (868 aa).

Residues glutamine 88, glycine 106–threonine 110, and aspartate 509 contribute to the ATP site. A compositionally biased stretch (polar residues) spans asparagine 816–glutamine 827. Residues asparagine 816–alanine 868 form a disordered region. Zn(2+) is bound by residues cysteine 845, cysteine 847, cysteine 856, and histidine 857.

It belongs to the SecA family. Monomer and homodimer. Part of the essential Sec protein translocation apparatus which comprises SecA, SecYEG and auxiliary proteins SecDF-YajC and YidC. It depends on Zn(2+) as a cofactor.

The protein localises to the cell inner membrane. It localises to the cytoplasm. The enzyme catalyses ATP + H2O + cellular proteinSide 1 = ADP + phosphate + cellular proteinSide 2.. In terms of biological role, part of the Sec protein translocase complex. Interacts with the SecYEG preprotein conducting channel. Has a central role in coupling the hydrolysis of ATP to the transfer of proteins into and across the cell membrane, serving as an ATP-driven molecular motor driving the stepwise translocation of polypeptide chains across the membrane. This is Protein translocase subunit SecA from Campylobacter concisus (strain 13826).